The primary structure comprises 44 residues: Cytochrome b559 subunit beta (44 aa).

Residues Trp-19–Ala-35 traverse the membrane as a helical segment. His-23 contributes to the heme binding site.

The protein belongs to the PsbE/PsbF family. As to quaternary structure, heterodimer of an alpha subunit and a beta subunit. PSII is composed of 1 copy each of membrane proteins PsbA, PsbB, PsbC, PsbD, PsbE, PsbF, PsbH, PsbI, PsbJ, PsbK, PsbL, PsbM, PsbT, PsbX, PsbY, PsbZ, Psb30/Ycf12, peripheral proteins PsbO, CyanoQ (PsbQ), PsbU, PsbV and a large number of cofactors. It forms dimeric complexes. Requires heme b as cofactor.

The protein localises to the cellular thylakoid membrane. This b-type cytochrome is tightly associated with the reaction center of photosystem II (PSII). PSII is a light-driven water:plastoquinone oxidoreductase that uses light energy to abstract electrons from H(2)O, generating O(2) and a proton gradient subsequently used for ATP formation. It consists of a core antenna complex that captures photons, and an electron transfer chain that converts photonic excitation into a charge separation. This Trichodesmium erythraeum (strain IMS101) protein is Cytochrome b559 subunit beta.